We begin with the raw amino-acid sequence, 142 residues long: Large ribosomal subunit protein uL13 (142 aa).

The protein belongs to the universal ribosomal protein uL13 family. Part of the 50S ribosomal subunit.

In terms of biological role, this protein is one of the early assembly proteins of the 50S ribosomal subunit, although it is not seen to bind rRNA by itself. It is important during the early stages of 50S assembly. This is Large ribosomal subunit protein uL13 from Haemophilus influenzae (strain 86-028NP).